Reading from the N-terminus, the 242-residue chain is High mobility group protein homolog (242 aa).

2 DNA-binding regions (HMG box) span residues 54 to 122 (PKRN…EANK) and 126 to 197 (KPVK…IDKE).

It is found in the host nucleus. The protein is High mobility group protein homolog (EF1) of Acheta domesticus (House cricket).